We begin with the raw amino-acid sequence, 434 residues long: Serine hydroxymethyltransferase (434 aa).

Residues leucine 128 and 132–134 each bind (6S)-5,6,7,8-tetrahydrofolate; that span reads GHL. Lysine 237 is modified (N6-(pyridoxal phosphate)lysine).

The protein belongs to the SHMT family. In terms of assembly, homodimer. Requires pyridoxal 5'-phosphate as cofactor.

The protein resides in the cytoplasm. The catalysed reaction is (6R)-5,10-methylene-5,6,7,8-tetrahydrofolate + glycine + H2O = (6S)-5,6,7,8-tetrahydrofolate + L-serine. It functions in the pathway one-carbon metabolism; tetrahydrofolate interconversion. The protein operates within amino-acid biosynthesis; glycine biosynthesis; glycine from L-serine: step 1/1. Catalyzes the reversible interconversion of serine and glycine with tetrahydrofolate (THF) serving as the one-carbon carrier. This reaction serves as the major source of one-carbon groups required for the biosynthesis of purines, thymidylate, methionine, and other important biomolecules. Also exhibits THF-independent aldolase activity toward beta-hydroxyamino acids, producing glycine and aldehydes, via a retro-aldol mechanism. This Corynebacterium efficiens (strain DSM 44549 / YS-314 / AJ 12310 / JCM 11189 / NBRC 100395) protein is Serine hydroxymethyltransferase.